A 180-amino-acid polypeptide reads, in one-letter code: Cytokinin-beta-glucosidase 1 (180 aa).

Functionally, hydrolyzes cytokinin glucosides thus liberating free cytokinins. The polypeptide is Cytokinin-beta-glucosidase 1 (ROLC1) (Panax ginseng (Korean ginseng)).